The chain runs to 653 residues: DNA polymerase (653 aa).

This sequence belongs to the DNA polymerase type-B family.

It catalyses the reaction DNA(n) + a 2'-deoxyribonucleoside 5'-triphosphate = DNA(n+1) + diphosphate. Replicates viral genomic DNA. This chain is DNA polymerase, found in Acidianus convivator (ABV).